The primary structure comprises 623 residues: Kelch-like protein diablo (623 aa).

Residues 1-54 (MGDLPGSGSTAQPRDAAVTGTGGNSTAGGGSSVGSTAVDRPPSPARLSHTSEKH) are disordered. The residue at position 19 (T19) is a Phosphothreonine. Residues 20–32 (GTGGNSTAGGGSS) show a composition bias toward gly residues. Positions 72–139 (CDVVLNVGGR…CYTAHIMVEE (68 aa)) constitute a BTB domain. The region spanning 174 to 276 (CLGIRAFADT…SPKFLVGTVG (103 aa)) is the BACK domain. 6 Kelch repeats span residues 323–369 (VLFA…VLND), 371–417 (LYAV…VLDG), 418–464 (FLYA…VLGG), 466–511 (LYAI…VFNN), 513–558 (IYAV…VVNG), and 559–605 (QLYA…VMRA).

Its pathway is protein modification; protein ubiquitination. Its function is as follows. Probable substrate-specific adapter of an E3 ubiquitin-protein ligase complex which mediates the ubiquitination and subsequent proteasomal degradation of target proteins. May have a role in synapse differentiation and growth. This Drosophila erecta (Fruit fly) protein is Kelch-like protein diablo.